The sequence spans 559 residues: Polypeptide N-acetylgalactosaminyltransferase 1 (559 aa).

Over 1-8 (MRKFAYCK) the chain is Cytoplasmic. Residues 9–28 (VVLATSLVWVLLDMFLLLYF) traverse the membrane as a helical; Signal-anchor for type II membrane protein segment. Residues 29-559 (SECNKCEEKK…LRNVTLPEIF (531 aa)) lie on the Lumenal side of the membrane. N-linked (GlcNAc...) asparagine glycosylation occurs at N95. Disulfide bonds link C106/C339, C330/C408, C442/C459, C482/C497, and C523/C540. A catalytic subdomain A region spans residues 115–225 (LPTTSVVIVF…VGWLEPLLAR (111 aa)). Positions 156 and 186 each coordinate substrate. Mn(2+) contacts are provided by D209 and H211. The segment at 285–347 (PVRTPTMAGG…TCSHVGHVFR (63 aa)) is catalytic subdomain B. Substrate is bound at residue W316. H344 lines the Mn(2+) pocket. Substrate is bound by residues R347 and Y352. The Ricin B-type lectin domain occupies 429-551 (FSLGEIRNVE…GSRSQQWLLR (123 aa)). N-linked (GlcNAc...) asparagine glycosylation occurs at N552.

The protein belongs to the glycosyltransferase 2 family. GalNAc-T subfamily. The cofactor is Mn(2+). As to expression, heart, brain, spleen, liver, skeletal muscle and kidney.

The protein resides in the golgi apparatus. It is found in the golgi stack membrane. It localises to the secreted. It carries out the reaction L-seryl-[protein] + UDP-N-acetyl-alpha-D-galactosamine = a 3-O-[N-acetyl-alpha-D-galactosaminyl]-L-seryl-[protein] + UDP + H(+). It catalyses the reaction L-threonyl-[protein] + UDP-N-acetyl-alpha-D-galactosamine = a 3-O-[N-acetyl-alpha-D-galactosaminyl]-L-threonyl-[protein] + UDP + H(+). It functions in the pathway protein modification; protein glycosylation. Catalyzes the initial reaction in O-linked oligosaccharide biosynthesis, the transfer of an N-acetyl-D-galactosamine residue to a serine or threonine residue on the protein receptor. Has a broad spectrum of substrates such as apomucin-, MUC5AC-, MUC1- and MUC2-derived peptides. The polypeptide is Polypeptide N-acetylgalactosaminyltransferase 1 (Rattus norvegicus (Rat)).